Consider the following 197-residue polypeptide: Na(+)-translocating NADH-quinone reductase subunit E (197 aa).

Transmembrane regions (helical) follow at residues 11-31 (SVFIENMALSFFLGMCTFLAV), 35-55 (VSTAFGLGVAVIFVLGLSVPV), 76-96 (FLKFITFIGVIAALVQILEMF), 108-128 (LGIYLPLITVNCAIFGAVSFM), 139-159 (VVYGFGAGLGWMLAIVALAGI), and 175-195 (LGITFIAAGLMAMAFMSFSGI).

This sequence belongs to the NqrDE/RnfAE family. Composed of six subunits; NqrA, NqrB, NqrC, NqrD, NqrE and NqrF.

Its subcellular location is the cell inner membrane. The enzyme catalyses a ubiquinone + n Na(+)(in) + NADH + H(+) = a ubiquinol + n Na(+)(out) + NAD(+). In terms of biological role, NQR complex catalyzes the reduction of ubiquinone-1 to ubiquinol by two successive reactions, coupled with the transport of Na(+) ions from the cytoplasm to the periplasm. NqrA to NqrE are probably involved in the second step, the conversion of ubisemiquinone to ubiquinol. The chain is Na(+)-translocating NADH-quinone reductase subunit E from Neisseria meningitidis serogroup B (strain ATCC BAA-335 / MC58).